The chain runs to 155 residues: Ribosomal RNA large subunit methyltransferase H (155 aa).

Residues Leu73, Gly104, and 123-128 (LSPLTL) contribute to the S-adenosyl-L-methionine site.

The protein belongs to the RNA methyltransferase RlmH family. As to quaternary structure, homodimer.

It localises to the cytoplasm. It catalyses the reaction pseudouridine(1915) in 23S rRNA + S-adenosyl-L-methionine = N(3)-methylpseudouridine(1915) in 23S rRNA + S-adenosyl-L-homocysteine + H(+). Functionally, specifically methylates the pseudouridine at position 1915 (m3Psi1915) in 23S rRNA. The polypeptide is Ribosomal RNA large subunit methyltransferase H (Pseudomonas fluorescens (strain ATCC BAA-477 / NRRL B-23932 / Pf-5)).